Reading from the N-terminus, the 209-residue chain is Ribosomal RNA large subunit methyltransferase E (209 aa).

Gly-63, Trp-65, Asp-83, Asp-99, and Asp-124 together coordinate S-adenosyl-L-methionine. Lys-164 (proton acceptor) is an active-site residue.

This sequence belongs to the class I-like SAM-binding methyltransferase superfamily. RNA methyltransferase RlmE family.

It localises to the cytoplasm. The catalysed reaction is uridine(2552) in 23S rRNA + S-adenosyl-L-methionine = 2'-O-methyluridine(2552) in 23S rRNA + S-adenosyl-L-homocysteine + H(+). Specifically methylates the uridine in position 2552 of 23S rRNA at the 2'-O position of the ribose in the fully assembled 50S ribosomal subunit. The polypeptide is Ribosomal RNA large subunit methyltransferase E (Shewanella pealeana (strain ATCC 700345 / ANG-SQ1)).